The primary structure comprises 86 residues: Large ribosomal subunit protein bL31 (86 aa).

The Zn(2+) site is built by C16, C18, C38, and C41.

This sequence belongs to the bacterial ribosomal protein bL31 family. Type A subfamily. In terms of assembly, part of the 50S ribosomal subunit. Requires Zn(2+) as cofactor.

Functionally, binds the 23S rRNA. The sequence is that of Large ribosomal subunit protein bL31 from Acidothermus cellulolyticus (strain ATCC 43068 / DSM 8971 / 11B).